The sequence spans 603 residues: DNA mismatch repair protein MutL (603 aa).

The protein belongs to the DNA mismatch repair MutL/HexB family.

In terms of biological role, this protein is involved in the repair of mismatches in DNA. It is required for dam-dependent methyl-directed DNA mismatch repair. May act as a 'molecular matchmaker', a protein that promotes the formation of a stable complex between two or more DNA-binding proteins in an ATP-dependent manner without itself being part of a final effector complex. This is DNA mismatch repair protein MutL from Bradyrhizobium diazoefficiens (strain JCM 10833 / BCRC 13528 / IAM 13628 / NBRC 14792 / USDA 110).